The following is a 72-amino-acid chain: MRPTQFVLNAAKKKSGFSVPVELTPLFLAMGVALASGTWFSYKKFFHDDSLRVSRKNPEQSALDKVLNQKAE.

Residues 20 to 42 (PVELTPLFLAMGVALASGTWFSY) traverse the membrane as a helical segment.

It belongs to the UPF0495 family.

It is found in the membrane. This Kluyveromyces lactis (strain ATCC 8585 / CBS 2359 / DSM 70799 / NBRC 1267 / NRRL Y-1140 / WM37) (Yeast) protein is UPF0495 protein KLLA0D04334g.